A 103-amino-acid chain; its full sequence is MYAVFQSGGKQHRVSEGQVVRLEKLELATGATVEFDSXLMVVNGEDVKIGAPVVAGAKVVAEVVAQGRGEKVKIVKFRRRKHSRKQQGHRQWFTEVKITGIQA.

Belongs to the bacterial ribosomal protein bL21 family. As to quaternary structure, part of the 50S ribosomal subunit. Contacts protein L20.

This protein binds to 23S rRNA in the presence of protein L20. This chain is Large ribosomal subunit protein bL21, found in Haemophilus influenzae (strain ATCC 51907 / DSM 11121 / KW20 / Rd).